Consider the following 304-residue polypeptide: 4-diphosphocytidyl-2-C-methyl-D-erythritol kinase (304 aa).

Lys23 is a catalytic residue. ATP is bound at residue 111–121 (PIGGGLGGGSS). The active site involves Asp153.

The protein belongs to the GHMP kinase family. IspE subfamily. Homodimer.

The catalysed reaction is 4-CDP-2-C-methyl-D-erythritol + ATP = 4-CDP-2-C-methyl-D-erythritol 2-phosphate + ADP + H(+). Its pathway is isoprenoid biosynthesis; isopentenyl diphosphate biosynthesis via DXP pathway; isopentenyl diphosphate from 1-deoxy-D-xylulose 5-phosphate: step 3/6. Functionally, catalyzes the phosphorylation of the position 2 hydroxy group of 4-diphosphocytidyl-2C-methyl-D-erythritol. This chain is 4-diphosphocytidyl-2-C-methyl-D-erythritol kinase, found in Wigglesworthia glossinidia brevipalpis.